A 90-amino-acid polypeptide reads, in one-letter code: Small ribosomal subunit protein uS15 (90 aa).

It belongs to the universal ribosomal protein uS15 family. As to quaternary structure, part of the 30S ribosomal subunit. Forms a bridge to the 50S subunit in the 70S ribosome, contacting the 23S rRNA.

In terms of biological role, one of the primary rRNA binding proteins, it binds directly to 16S rRNA where it helps nucleate assembly of the platform of the 30S subunit by binding and bridging several RNA helices of the 16S rRNA. Forms an intersubunit bridge (bridge B4) with the 23S rRNA of the 50S subunit in the ribosome. In Helicobacter hepaticus (strain ATCC 51449 / 3B1), this protein is Small ribosomal subunit protein uS15.